The chain runs to 136 residues: Large ribosomal subunit protein uL16 (136 aa).

Belongs to the universal ribosomal protein uL16 family. Part of the 50S ribosomal subunit.

In terms of biological role, binds 23S rRNA and is also seen to make contacts with the A and possibly P site tRNAs. The sequence is that of Large ribosomal subunit protein uL16 from Histophilus somni (strain 129Pt) (Haemophilus somnus).